Consider the following 362-residue polypeptide: NAD(P)H-quinone oxidoreductase subunit 1, chloroplastic (362 aa).

The next 8 helical transmembrane spans lie at 27-47 (IWILPILALLLGITIEVLVIV), 103-123 (IAVISILLSFLVIPLGYHFVL), 128-148 (IGVFLWIAISSIAPIGLLMAG), 164-184 (AAQSISYEIPLTFCVLAISLL), 202-222 (FFGWNLWRQPIGFLVFLISSL), 247-267 (YSGIKYGLFYLVSYLNLLVSS), 303-323 (VIGIFITLTKAYLFLFISITI), and 342-362 (FLLPISLGNLLLTTSFQLVSL).

This sequence belongs to the complex I subunit 1 family. As to quaternary structure, NDH is composed of at least 16 different subunits, 5 of which are encoded in the nucleus.

It localises to the plastid. The protein resides in the chloroplast thylakoid membrane. It carries out the reaction a plastoquinone + NADH + (n+1) H(+)(in) = a plastoquinol + NAD(+) + n H(+)(out). It catalyses the reaction a plastoquinone + NADPH + (n+1) H(+)(in) = a plastoquinol + NADP(+) + n H(+)(out). Functionally, NDH shuttles electrons from NAD(P)H:plastoquinone, via FMN and iron-sulfur (Fe-S) centers, to quinones in the photosynthetic chain and possibly in a chloroplast respiratory chain. The immediate electron acceptor for the enzyme in this species is believed to be plastoquinone. Couples the redox reaction to proton translocation, and thus conserves the redox energy in a proton gradient. The sequence is that of NAD(P)H-quinone oxidoreductase subunit 1, chloroplastic from Saccharum hybrid (Sugarcane).